A 466-amino-acid chain; its full sequence is Glutamate--tRNA ligase 1 (466 aa).

Positions 9–19 (PSPTGLLHIGN) match the 'HIGH' region motif. The short motif at 238–242 (KLSKR) is the 'KMSKS' region element. Lysine 241 lines the ATP pocket.

Belongs to the class-I aminoacyl-tRNA synthetase family. Glutamate--tRNA ligase type 1 subfamily. As to quaternary structure, monomer.

It is found in the cytoplasm. The catalysed reaction is tRNA(Glu) + L-glutamate + ATP = L-glutamyl-tRNA(Glu) + AMP + diphosphate. In terms of biological role, catalyzes the attachment of glutamate to tRNA(Glu) in a two-step reaction: glutamate is first activated by ATP to form Glu-AMP and then transferred to the acceptor end of tRNA(Glu). This Gluconacetobacter diazotrophicus (strain ATCC 49037 / DSM 5601 / CCUG 37298 / CIP 103539 / LMG 7603 / PAl5) protein is Glutamate--tRNA ligase 1.